Consider the following 147-residue polypeptide: MVHFTAEEKAIITSLWGKVNVEEDGGEALGRLLVVYPWTQRFFDTFGNLSSASAIMGNPKVKAHGKKVLSSLGEAIKNMDDLKGTFSHLSELHCDRLHVDPENFRLLGNVLVIVLAKHFGKEFTPQIQAACQKMVAGVATALAHKYH.

A Globin domain is found at 3–147; sequence HFTAEEKAII…VATALAHKYH (145 aa). His64 and His93 together coordinate heme b.

It belongs to the globin family. In terms of assembly, heterotetramer of two alpha chains and two gamma chains in fetal hemoglobin (Hb F). Red blood cells.

Functionally, gamma chains make up the fetal hemoglobin F, in combination with alpha chains. This Otolemur crassicaudatus (Brown greater galago) protein is Hemoglobin subunit gamma (HBG).